We begin with the raw amino-acid sequence, 64 residues long: Large ribosomal subunit protein bL35 (64 aa).

A disordered region spans residues 1 to 28 (MPKVKTKSGAKKRFKLTGSGKIKRKSAY).

Belongs to the bacterial ribosomal protein bL35 family.

The chain is Large ribosomal subunit protein bL35 from Cytophaga hutchinsonii (strain ATCC 33406 / DSM 1761 / CIP 103989 / NBRC 15051 / NCIMB 9469 / D465).